We begin with the raw amino-acid sequence, 139 residues long: Large ribosomal subunit protein bL17 (139 aa).

Belongs to the bacterial ribosomal protein bL17 family. In terms of assembly, part of the 50S ribosomal subunit. Contacts protein L32.

This Afipia carboxidovorans (strain ATCC 49405 / DSM 1227 / KCTC 32145 / OM5) (Oligotropha carboxidovorans) protein is Large ribosomal subunit protein bL17.